The primary structure comprises 328 residues: tRNA dimethylallyltransferase (328 aa).

ATP is bound at residue 19-26; sequence GPTASGKT. Substrate is bound at residue 21 to 26; that stretch reads TASGKT. 3 interaction with substrate tRNA regions span residues 50 to 53, 174 to 178, and 257 to 262; these read DSAL, QRIQR, and RCVGYR.

It belongs to the IPP transferase family. In terms of assembly, monomer. Mg(2+) serves as cofactor.

The catalysed reaction is adenosine(37) in tRNA + dimethylallyl diphosphate = N(6)-dimethylallyladenosine(37) in tRNA + diphosphate. In terms of biological role, catalyzes the transfer of a dimethylallyl group onto the adenine at position 37 in tRNAs that read codons beginning with uridine, leading to the formation of N6-(dimethylallyl)adenosine (i(6)A). The polypeptide is tRNA dimethylallyltransferase (Leptothrix cholodnii (strain ATCC 51168 / LMG 8142 / SP-6) (Leptothrix discophora (strain SP-6))).